The following is a 1002-amino-acid chain: Transposase for transposon gamma-delta (1002 aa).

The protein belongs to the transposase 7 family.

In terms of biological role, required for transposition of transposon Tn1000. This Escherichia coli (strain K12) protein is Transposase for transposon gamma-delta (tnpA).